The primary structure comprises 174 residues: N5-carboxyaminoimidazole ribonucleotide mutase (174 aa).

Residues Ser-16, Asp-19, and Arg-46 each coordinate substrate.

It belongs to the AIR carboxylase family. Class I subfamily.

The catalysed reaction is 5-carboxyamino-1-(5-phospho-D-ribosyl)imidazole + H(+) = 5-amino-1-(5-phospho-D-ribosyl)imidazole-4-carboxylate. It functions in the pathway purine metabolism; IMP biosynthesis via de novo pathway; 5-amino-1-(5-phospho-D-ribosyl)imidazole-4-carboxylate from 5-amino-1-(5-phospho-D-ribosyl)imidazole (N5-CAIR route): step 2/2. Catalyzes the conversion of N5-carboxyaminoimidazole ribonucleotide (N5-CAIR) to 4-carboxy-5-aminoimidazole ribonucleotide (CAIR). This is N5-carboxyaminoimidazole ribonucleotide mutase from Mycobacterium tuberculosis (strain CDC 1551 / Oshkosh).